Here is a 345-residue protein sequence, read N- to C-terminus: uncharacterized protein (345 aa).

The protein belongs to the Gfo/Idh/MocA family. Biliverdin reductase subfamily.

This is an uncharacterized protein from Escherichia coli (strain K12).